Consider the following 396-residue polypeptide: Elongation factor Tu (396 aa).

The tr-type G domain maps to 10–206 (KPHCNIGTIG…AVDAYIPQPE (197 aa)). The G1 stretch occupies residues 19–26 (GHVDHGKT). 19–26 (GHVDHGKT) serves as a coordination point for GTP. Thr26 lines the Mg(2+) pocket. The interval 60–64 (GITIS) is G2. Residues 81-84 (DCPG) are G3. GTP contacts are provided by residues 81–85 (DCPGH) and 136–139 (NKCD). The interval 136–139 (NKCD) is G4. The tract at residues 174–176 (SAL) is G5.

It belongs to the TRAFAC class translation factor GTPase superfamily. Classic translation factor GTPase family. EF-Tu/EF-1A subfamily. In terms of assembly, monomer.

The protein resides in the cytoplasm. It catalyses the reaction GTP + H2O = GDP + phosphate + H(+). Functionally, GTP hydrolase that promotes the GTP-dependent binding of aminoacyl-tRNA to the A-site of ribosomes during protein biosynthesis. This Nitrobacter hamburgensis (strain DSM 10229 / NCIMB 13809 / X14) protein is Elongation factor Tu.